A 1275-amino-acid polypeptide reads, in one-letter code: Inner capsid protein lambda-1 (1275 aa).

The segment covering 1–12 has biased composition (basic residues); that stretch reads MKRIPRKTKGKS. The interval 1–149 is disordered; that stretch reads MKRIPRKTKG…DNEGGSNQKP (149 aa). Basic and acidic residues-rich tracts occupy residues 18-35 and 75-117; these read DSTE…DKQN and NNDE…DKSK. The span at 118-149 shows a compositional bias: polar residues; that stretch reads AQVTYSDTGINNANELSRSGNVDNEGGSNQKP. The C2H2-type zinc finger occupies 181–203; the sequence is YQCHVCSAVLFSPLDLDAHVASH.

It belongs to the turreted BTV-fold inner capsid family. Homodecamer; each decamer is made up of two conformers of VP2, called VP2A and VP2B. 12 homodecamers assemble to form an icosahedral capsid. Interacts with protein mu-NS; in viral inclusions. The cofactor is Mg(2+). It depends on Mn(2+) as a cofactor.

Its subcellular location is the virion. It catalyses the reaction ATP + H2O = ADP + phosphate + H(+). Its function is as follows. Inner capsid protein that self-assembles to form an icosahedral capsid with a T=2 symmetry, which consists of 120 copies of VP2, with channels at each of its five-fold vertices. This capsid constitutes the innermost concentric layer of the viral mature particle. Functionally, displays NTPase, RNA 5'-triphosphatase (RTPase) and RNA helicase activities and probably participates in transcription of the viral genome. Helicase activity might be involved in unwinding or reannealing dsRNA during RNA synthesis. RTPase enzymatic activity represents the first step in RNA capping, which yields a 5'-diphosphorylated plus-strand RNA. In Reovirus type 1 (strain Lang) (T1L), this protein is Inner capsid protein lambda-1 (L3).